Consider the following 1161-residue polypeptide: MAASRTASTANTNNGASTAPLRISFAKIKEPLEVPNLLALQTESFDWLLGNDAWKARVEAALDSGQDVPTKSGLEEIFEEISPIEDFSGSMSLTFRDHRFEPPKNSIDECKDRDFTYAAPLFVTAEFTNNETGEIKSQTVFMGDFPLMTNKGTFVINGTERVVVSQLVRSPGVYFDSSIDKTSDKDIFSAKVIPSRGAWLEMEIDKRDMVGVRIDRKRKQSVTVLLKALGWTTEQILEEFGEYESMRATLEKDHTQGQDDALLDIYRKLRPGEPPTREAAQTLLENLYFNPKRYDLAKVGRYKVNKKLGGEAPLDAGILTVEDIISSIKYLVKLHAGETETVGDNGTSIVVETDDIDHFGNRRLRNVGELIQNQVRTGLARMERVVRERMTTQDVEAITPQTLINIRPVVASIKEFFGTSQLSQFMDQNNPLSGLTHKRRLSALGPGGLSRERAGFEVRDVHPSHYGRMCPIETPEGPNIGLIGSLASYGRVNAFGFVETPYRRVTDGVVTDEVDYLTADEEDRFVIAQANAPLGDDFRFEETRVLVRRRGGEVDYVPGDDVDYMDVSPRQMVSVATAMIPFLEHDDANRALMGANMMRQAVPLIKSEAPLVGTGMEYRCAVDAGDVLKSEKDGVVQEVSADYVTTANDDGTYTTYRLHKFSRSNQGTSVNQKVVVDEGARVIAGQVLADGPATENGEMALGKNLLVAFMPWEGHNYEDAIILSQRLVQDDVLSSIHIEEHEVDARDTKLGPEEITRDIPNVSEEVLADLDERGIIRIGAEVVAGDILVGKVTPKGETELTPEERLLRAIFGEKAREVRDTSLKVPHGEIGKVIGVRVFDREEGDELPPGVNQLVRVYVAQKRKITDGDKLAGRHGNKGVISKILPIEDMPFLEDGTPVDIILNPLGVPSRMNPGQVLEIHLGWLASRGWDVSGLADDWAQRLQAIEADQVAPGTNVATPVFDGAREDELAGLLQHTIPNRDGERMVLPTGKAPLFDGRSGEPFPEPISVGYMYILKLHHLVDDKLHARSTGPYSMITQQPLGGKAQFGGQRFGEMEVWALEAYGAAYALQELLTIKSDDVTGRVKVYEAIVKGENIPEPGIPESFKVLIKEMQSLCLNVEVLSSDGMSIEMRDTDEDVFRAAEELGIDLSRREPSSVEEV.

This sequence belongs to the RNA polymerase beta chain family. In terms of assembly, the RNAP catalytic core consists of 2 alpha, 1 beta, 1 beta' and 1 omega subunit. When a sigma factor is associated with the core the holoenzyme is formed, which can initiate transcription.

It carries out the reaction RNA(n) + a ribonucleoside 5'-triphosphate = RNA(n+1) + diphosphate. Functionally, DNA-dependent RNA polymerase catalyzes the transcription of DNA into RNA using the four ribonucleoside triphosphates as substrates. The protein is DNA-directed RNA polymerase subunit beta of Streptomyces avermitilis (strain ATCC 31267 / DSM 46492 / JCM 5070 / NBRC 14893 / NCIMB 12804 / NRRL 8165 / MA-4680).